A 458-amino-acid chain; its full sequence is MEKGYKMNRSSVYRNMFSEKPVRVSSIRRSYTARGNPQGSLIIPSSSRSRVSYVTPISSRSVRLVRSSAPVVASSSNLDFTLVDAMNSEFKVNRTNEKAEMIELNDRLANFLDKVRSLEQQNKMLLAELEQVKGKRPSKIGDLYEQELRELRLQIDQISNEKSRVEVERDNLADDLQKLREKLQDEVIQREDAENNLAAFRQDVDDACLARLDLERKVETLQEEIMFLKKLHEEEIIELQAQIRDSQFKVEMDVVRPDLTAALQDVRSQFDKLASKNIAETEELYKSKLADITDSASRNNDALRLAKQENNEYRRQVQSLTCEIDALKGTNESLERQMQDVEDRYNMETTNAQDTISHLEDEISHLKDEMTRHLQEYQELLTVKMALDVEIATYRKLLEGEENRISMPLPSFGSMSLSDAMFEQQPFENRTSKKKIVIKTVETSGGDVISETTQKIED.

The head stretch occupies residues 1–100; that stretch reads MEKGYKMNRS…KVNRTNEKAE (100 aa). The IF rod domain maps to 97–405; it reads EKAEMIELND…KLLEGEENRI (309 aa). Residues 406–458 are tail; the sequence is SMPLPSFGSMSLSDAMFEQQPFENRTSKKKIVIKTVETSGGDVISETTQKIED.

Belongs to the intermediate filament family.

In Tetronarce californica (Pacific electric ray), this protein is Type III intermediate filament.